The primary structure comprises 122 residues: MKKEQRIKKNREFSAVFKKGSSMANRQFVLYVLPKEGQDRLRLGLSVSKRVGNAVCRNRIKRLVRAAFHELEGQLRPDCDYVVIARNPARDLSFKEVRSSLEHVMKKAKVLAPLYGNRKKDS.

It belongs to the RnpA family. As to quaternary structure, consists of a catalytic RNA component (M1 or rnpB) and a protein subunit.

It carries out the reaction Endonucleolytic cleavage of RNA, removing 5'-extranucleotides from tRNA precursor.. In terms of biological role, RNaseP catalyzes the removal of the 5'-leader sequence from pre-tRNA to produce the mature 5'-terminus. It can also cleave other RNA substrates such as 4.5S RNA. The protein component plays an auxiliary but essential role in vivo by binding to the 5'-leader sequence and broadening the substrate specificity of the ribozyme. In Shouchella clausii (strain KSM-K16) (Alkalihalobacillus clausii), this protein is Ribonuclease P protein component.